We begin with the raw amino-acid sequence, 447 residues long: Chaperone protein dnaJ A7B, chloroplastic (447 aa).

The transit peptide at 1 to 86 (MALLQFGGTL…HRRSSRFIVR (86 aa)) directs the protein to the chloroplast. In terms of domain architecture, J spans 90-154 (DFYSTLGVSR…EKRSIYDKYG (65 aa)). The CR-type zinc-finger motif lies at 217–298 (GVEKEIEITR…CGGDGRVRKT (82 aa)). Cys230, Cys233, Cys247, Cys250, Cys273, Cys276, Cys286, and Cys289 together coordinate Zn(2+). CXXCXGXG motif repeat units follow at residues 230-237 (CNTCDGTG), 247-254 (CKTCGGQG), 273-280 (CNTCGGTG), and 286-293 (CNTCGGDG).

The protein belongs to the DnaJ family. Interacts with PCNA. As to expression, expressed in roots, stems, leaves and panicles.

It localises to the plastid. Its subcellular location is the chloroplast. In terms of biological role, plays pivotal roles in chloroplast development. Is essential for the regulation of chloroplast development and differentiation. This is Chaperone protein dnaJ A7B, chloroplastic from Oryza sativa subsp. japonica (Rice).